Here is a 450-residue protein sequence, read N- to C-terminus: Serine incorporator 2 (450 aa).

11 helical membrane-spanning segments follow: residues 5–27, 40–57, 96–118, 131–150, 160–182, 203–225, 238–257, 264–286, 315–337, 380–402, and 417–439; these read LGACSLLSCASCLCGSAPCILCG, LLFTSFLFLGVLVSIIML, AVYRMCFATAAFFFFFMLLMICV, GFWFFKFLILVGITVGAFYI, FYFGVVGSFLFILIQLILFVDFA, AGLFFFTFLFYLLSIAAVALMFV, VFISLNLTFCVCVSIIAVLP, PNSGLLQASVITLYTMFVTWSAL, VWWDAPSIVGLVIFILCTFFISL, TYSYSFFHFCLVLASLHVMMTLT, and WTSVWVKICASWAGLFLYLWTLV.

This sequence belongs to the TDE1 family.

It is found in the cell membrane. It catalyses the reaction a 1,2-diacyl-sn-glycero-3-phospho-L-serine(in) = a 1,2-diacyl-sn-glycero-3-phospho-L-serine(out). The catalysed reaction is a 1,2-diacyl-sn-glycero-3-phosphocholine(in) = a 1,2-diacyl-sn-glycero-3-phosphocholine(out). It carries out the reaction a 1,2-diacyl-sn-glycero-3-phosphoethanolamine(in) = a 1,2-diacyl-sn-glycero-3-phosphoethanolamine(out). Functionally, non-ATP-dependent, non-specific lipid transporter for phosphatidylserine, phosphatidylcholine, and phosphatidylethanolamine. Functions as a scramblase that flips lipids in both directions across the membrane. In contrast to SERINC3 and SERINC5, has no effect on gammaretrovirus particles infectivity. The chain is Serine incorporator 2 (Serinc2) from Mus musculus (Mouse).